The following is a 615-amino-acid chain: uncharacterized protein (615 aa).

Composition is skewed to polar residues over residues 1–11 (MSETSSNSPAS), 41–55 (LSQNAQGASKSSSKV), and 128–140 (TSGSSTGLSNAPP). 2 disordered regions span residues 1–61 (MSET…QALV) and 97–149 (HQNH…KASS). Phosphoserine occurs at positions 149 and 152. Residues 181–217 (LIHPEQTDRGLPYAPDEKFHNSGSLKLPKGASLEDLS) form a disordered region. Phosphoserine is present on residues S219 and S275. 3 disordered regions span residues 266–481 (KPLA…KFTG), 493–565 (RLQK…KPSF), and 586–615 (GVETRKEVEPKEEAVIPEEDVEVEVETEEQ). Residues 272-283 (RQRSTADLTESD) are compositionally biased toward polar residues. A phosphothreonine mark is found at T276 and T297. Basic and acidic residues predominate over residues 312 to 323 (EAEKGFYTKDGE). Positions 356–376 (PSLSSASQPSAASSSSSSEPS) are enriched in low complexity. Over residues 505 to 522 (PNKSKSPSGTKSPASGET) the composition is skewed to polar residues. T514 bears the Phosphothreonine mark. S516 bears the Phosphoserine mark. Over residues 586 to 599 (GVETRKEVEPKEEA) the composition is skewed to basic and acidic residues. Residues 600 to 615 (VIPEEDVEVEVETEEQ) are compositionally biased toward acidic residues.

This is an uncharacterized protein from Schizosaccharomyces pombe (strain 972 / ATCC 24843) (Fission yeast).